A 78-amino-acid polypeptide reads, in one-letter code: Metallothionein-like protein type 2 (78 aa).

The protein belongs to the metallothionein superfamily. Type 15 family.

In terms of biological role, metallothioneins have a high content of cysteine residues that bind various heavy metals. The sequence is that of Metallothionein-like protein type 2 from Musa acuminata (Banana).